Reading from the N-terminus, the 204-residue chain is Elongation factor Ts (204 aa).

The interval Thr80 to Val83 is involved in Mg(2+) ion dislocation from EF-Tu.

The protein belongs to the EF-Ts family.

It is found in the cytoplasm. Its function is as follows. Associates with the EF-Tu.GDP complex and induces the exchange of GDP to GTP. It remains bound to the aminoacyl-tRNA.EF-Tu.GTP complex up to the GTP hydrolysis stage on the ribosome. The chain is Elongation factor Ts from Caldicellulosiruptor bescii (strain ATCC BAA-1888 / DSM 6725 / KCTC 15123 / Z-1320) (Anaerocellum thermophilum).